Here is a 175-residue protein sequence, read N- to C-terminus: Shikimate kinase (175 aa).

11-16 (GAGKTT) lines the ATP pocket. A Mg(2+)-binding site is contributed by Thr15. The substrate site is built by Asp33, Arg57, and Gly79. Arg118 contacts ATP. Position 140 (Arg140) interacts with substrate.

This sequence belongs to the shikimate kinase family. As to quaternary structure, monomer. The cofactor is Mg(2+).

The protein localises to the cytoplasm. The enzyme catalyses shikimate + ATP = 3-phosphoshikimate + ADP + H(+). The protein operates within metabolic intermediate biosynthesis; chorismate biosynthesis; chorismate from D-erythrose 4-phosphate and phosphoenolpyruvate: step 5/7. Functionally, catalyzes the specific phosphorylation of the 3-hydroxyl group of shikimic acid using ATP as a cosubstrate. The sequence is that of Shikimate kinase from Bacteroides thetaiotaomicron (strain ATCC 29148 / DSM 2079 / JCM 5827 / CCUG 10774 / NCTC 10582 / VPI-5482 / E50).